Here is a 308-residue protein sequence, read N- to C-terminus: Isoaspartyl peptidase/L-asparaginase (308 aa).

Position 1 is an N-acetylmethionine (Met1). The Nucleophile role is filled by Thr168. Substrate contacts are provided by residues 196 to 199 (RVGD) and 219 to 222 (TGHG).

It belongs to the Ntn-hydrolase family. Heterodimer of an alpha and beta chain produced by autocleavage. This heterodimer may then dimerize in turn, giving rise to a heterotetramer. In terms of processing, cleaved into an alpha and beta chain by autocatalysis; this activates the enzyme. The N-terminal residue of the beta subunit is responsible for the nucleophile hydrolase activity.

The protein localises to the cytoplasm. The catalysed reaction is L-asparagine + H2O = L-aspartate + NH4(+). It carries out the reaction Cleavage of a beta-linked Asp residue from the N-terminus of a polypeptide.. Has both L-asparaginase and beta-aspartyl peptidase activity. May be involved in the production of L-aspartate, which can act as an excitatory neurotransmitter in some brain regions. Is highly active with L-Asp beta-methyl ester. Besides, has catalytic activity toward beta-aspartyl dipeptides and their methyl esters, including beta-L-Asp-L-Phe, beta-L-Asp-L-Phe methyl ester (aspartame), beta-L-Asp-L-Ala, beta-L-Asp-L-Leu and beta-L-Asp-L-Lys. Does not have aspartylglucosaminidase activity and is inactive toward GlcNAc-L-Asn. Likewise, has no activity toward glutamine. This chain is Isoaspartyl peptidase/L-asparaginase (ASRGL1), found in Bos taurus (Bovine).